Here is a 588-residue protein sequence, read N- to C-terminus: Lysine--tRNA ligase (588 aa).

Polar residues predominate over residues 1-10 (MDSSVSTEPL). The segment at 1 to 54 (MDSSVSTEPLSKNALKREKKAKEKEQLEQEKKAAAVAKRQMEQHNLPENDDLDP) is disordered. Residues 20-47 (KAKEKEQLEQEKKAAAVAKRQMEQHNLP) are compositionally biased toward basic and acidic residues.

This sequence belongs to the class-II aminoacyl-tRNA synthetase family.

Its subcellular location is the cytoplasm. The enzyme catalyses tRNA(Lys) + L-lysine + ATP = L-lysyl-tRNA(Lys) + AMP + diphosphate. This chain is Lysine--tRNA ligase (LYSRS), found in Solanum lycopersicum (Tomato).